A 151-amino-acid polypeptide reads, in one-letter code: UPF0178 protein GSU0171 (151 aa).

It belongs to the UPF0178 family.

The chain is UPF0178 protein GSU0171 from Geobacter sulfurreducens (strain ATCC 51573 / DSM 12127 / PCA).